The sequence spans 565 residues: Tetratricopeptide repeat protein 39A (565 aa).

TPR repeat units follow at residues 271 to 304 (AIFLFFAGRAEEIKGNIDEAVALFEDGCKAQQVW), 461 to 494 (CLIQLLKGLCLKNQGQMQAAEDCFNQVYISEKKL), and 502 to 535 (PNALLEMSLLFIDTGRKEQAIKLLQKAKNNYKVY).

It belongs to the TTC39 family.

The polypeptide is Tetratricopeptide repeat protein 39A (ttc39a) (Danio rerio (Zebrafish)).